The primary structure comprises 264 residues: Thymidylate synthase (264 aa).

Position 21 (Arg-21) interacts with dUMP. Residue His-51 participates in (6R)-5,10-methylene-5,6,7,8-tetrahydrofolate binding. Residue 126 to 127 coordinates dUMP; it reads RR. Residue Cys-146 is the Nucleophile of the active site. DUMP contacts are provided by residues 166 to 169, Asn-177, and 207 to 209; these read RSVD and HLY. (6R)-5,10-methylene-5,6,7,8-tetrahydrofolate is bound at residue Asp-169. Ala-263 contributes to the (6R)-5,10-methylene-5,6,7,8-tetrahydrofolate binding site.

The protein belongs to the thymidylate synthase family. Bacterial-type ThyA subfamily. As to quaternary structure, homodimer.

It is found in the cytoplasm. The enzyme catalyses dUMP + (6R)-5,10-methylene-5,6,7,8-tetrahydrofolate = 7,8-dihydrofolate + dTMP. Its pathway is pyrimidine metabolism; dTTP biosynthesis. Catalyzes the reductive methylation of 2'-deoxyuridine-5'-monophosphate (dUMP) to 2'-deoxythymidine-5'-monophosphate (dTMP) while utilizing 5,10-methylenetetrahydrofolate (mTHF) as the methyl donor and reductant in the reaction, yielding dihydrofolate (DHF) as a by-product. This enzymatic reaction provides an intracellular de novo source of dTMP, an essential precursor for DNA biosynthesis. This Geobacillus sp. (strain WCH70) protein is Thymidylate synthase.